Reading from the N-terminus, the 494-residue chain is MKIVLEEIAMATDKEVLIKEFLKALHEDNAAIFAGAGLSAASGFVNWKGLLKEAADELELDIEKETDLISLAQYFFNKNGRQRLSQLVIDNFSAEAQLNENHRILAQLPIDTYWTTNYDRLIEKSLTDVGKNPDVKIKQSDFALLKPKRDAIVYKMHGDIERASETVLIKDEYEMFHENNQLFSIGLKGDLISKTFLFIGYSFEDPDLEYILSRIRVLMGQDGRNHYCFFRKVNRNQYNHLPKEEGDEKFRYDSIKQELKCADLERYHIKPVLVDKYEDITEILQTILQRYCRSKILISGSAVEYKQFVPDHNTAQMFIHTLSREMVKAGFKIASGFGLGVGSAVINGSLDYVYSTNKRKISDYLILRPFPQYATNGLELMDLWDQYRRDFISDVGCAVFIFGNKEVNGKVVDAGGVRKEFDIAVAQGIKVIPVGATGYMSKTLWEETITNYDKYYSDFPALKADFEFIGDASHNHHEIITRIIKIITALRAGR.

In terms of domain architecture, Deacetylase sirtuin-type spans 11–295 (ATDKEVLIKE…TILQRYCRSK (285 aa)). Positions 30, 119, and 157 each coordinate NAD(+). The active-site Proton acceptor is H157. The interval 296 to 494 (ILISGSAVEY…KIITALRAGR (199 aa)) is SLOG (STALD) domain, binds 3'cADPR. 3'cADPR contacts are provided by G300, S301, L339, F370, R388, K405, G416, and E420.

The protein belongs to the soluble Thoeris ThsA family. Homotetramer.

Its subcellular location is the cytoplasm. The catalysed reaction is NAD(+) + H2O = ADP-D-ribose + nicotinamide + H(+). Probably activated by a signal molecule generated by endogenous ThsB1 and/or ThsB2. Can also be activated by the signal generated by ThsB of B.cereus. The activating molecule might be 3' cyclic ADP-D-ribose (3'cADPR). Probable NAD(+) hydrolyzing component (NADase) of the Thoeris antiviral defense system, composed of ThsA, TIR1 (thsB1) and TIR2 (thsB2). Activated by a signal molecule generated by endogenous TIR1, TIR2 or ThsB from B.cereus. After activation it binds and hydrolyzes NAD(+), leading to cell death and inhibition of phage replication. Expression of Thoeris in B.subtilis (strain BEST7003) confers resistance to phages phi29, phi3T, SPBeta, SBSphi11, SBSphi13, SBSphiJ, SPO1 and SPR but not SBSphiC. The TIR paralogs confer overlapping resistance to different phages. The protein is NAD(+) hydrolase ThsA of Cytobacillus dafuensis (Bacillus dafuensis).